The primary structure comprises 124 residues: Large ribosomal subunit protein eL22z (124 aa).

This sequence belongs to the eukaryotic ribosomal protein eL22 family.

The chain is Large ribosomal subunit protein eL22z (RPL22B) from Arabidopsis thaliana (Mouse-ear cress).